Consider the following 144-residue polypeptide: Maximins 2/H8 type 2 (144 aa).

The N-terminal stretch at 1 to 18 (MNFKYIVAVSFLIASAYA) is a signal peptide. Residues 19–43 (RSEENEIQSLSQRDVLEEESLREIR) constitute a propeptide that is removed on maturation. Asparagine 70 carries the asparagine amide modification. The propeptide occupies 74–123 (TAEEHEVMKRLETVMRDLDSLDYPEEASERETRGFNQEEIANLFTKKEKR). Isoleucine 143 is subject to Isoleucine amide.

The protein belongs to the bombinin family. In terms of tissue distribution, expressed by the skin glands.

The protein resides in the secreted. In terms of biological role, maximin-2 shows antibacterial activity against both Gram-positive and Gram-negative bacteria. It also shows antimicrobial activity against the fungus C.albicans, but not against A.flavus nor P.uticale. It has little hemolytic activity. Functionally, maximin-H8 shows antimicrobial activity against bacteria and against the fungus C.albicans. Shows strong hemolytic activity. The chain is Maximins 2/H8 type 2 from Bombina maxima (Giant fire-bellied toad).